A 49-amino-acid chain; its full sequence is Large ribosomal subunit protein bL33A (49 aa).

The protein belongs to the bacterial ribosomal protein bL33 family.

The protein is Large ribosomal subunit protein bL33A of Bacillus cytotoxicus (strain DSM 22905 / CIP 110041 / 391-98 / NVH 391-98).